The chain runs to 43 residues: Cytochrome b559 subunit beta (43 aa).

A helical transmembrane segment spans residues 18 to 34 (WLAVHGLAIPTVFFLGG). His-22 is a binding site for heme.

Belongs to the PsbE/PsbF family. Heterodimer of an alpha subunit and a beta subunit. PSII is composed of 1 copy each of membrane proteins PsbA, PsbB, PsbC, PsbD, PsbE, PsbF, PsbH, PsbI, PsbJ, PsbK, PsbL, PsbM, PsbT, PsbX, PsbY, PsbZ, Psb30/Ycf12, at least 3 peripheral proteins of the oxygen-evolving complex and a large number of cofactors. It forms dimeric complexes. Requires heme b as cofactor.

The protein localises to the plastid. The protein resides in the chloroplast thylakoid membrane. Functionally, this b-type cytochrome is tightly associated with the reaction center of photosystem II (PSII). PSII is a light-driven water:plastoquinone oxidoreductase that uses light energy to abstract electrons from H(2)O, generating O(2) and a proton gradient subsequently used for ATP formation. It consists of a core antenna complex that captures photons, and an electron transfer chain that converts photonic excitation into a charge separation. This chain is Cytochrome b559 subunit beta, found in Thalassiosira pseudonana (Marine diatom).